The sequence spans 395 residues: Elongation factor Tu (395 aa).

The region spanning 10 to 205 is the tr-type G domain; that stretch reads KPHVNIGTIG…CDTWIPLPPR (196 aa). The G1 stretch occupies residues 19-26; that stretch reads GHVDHGKT. A GTP-binding site is contributed by 19–26; that stretch reads GHVDHGKT. T26 lines the Mg(2+) pocket. Positions 60-64 are G2; sequence GITIN. Residues 81-84 form a G3 region; that stretch reads DCPG. Residues 81 to 85 and 136 to 139 contribute to the GTP site; these read DCPGH and NKCD. Positions 136–139 are G4; that stretch reads NKCD. Positions 174–176 are G5; the sequence is SAL.

It belongs to the TRAFAC class translation factor GTPase superfamily. Classic translation factor GTPase family. EF-Tu/EF-1A subfamily. As to quaternary structure, monomer.

It localises to the cytoplasm. It carries out the reaction GTP + H2O = GDP + phosphate + H(+). GTP hydrolase that promotes the GTP-dependent binding of aminoacyl-tRNA to the A-site of ribosomes during protein biosynthesis. This chain is Elongation factor Tu, found in Parabacteroides distasonis (strain ATCC 8503 / DSM 20701 / CIP 104284 / JCM 5825 / NCTC 11152).